A 177-amino-acid polypeptide reads, in one-letter code: Bifunctional protein PyrR (177 aa).

The PRPP-binding signature appears at 99 to 111 (VVLVDDVLFTGRT).

This sequence belongs to the purine/pyrimidine phosphoribosyltransferase family. PyrR subfamily.

The enzyme catalyses UMP + diphosphate = 5-phospho-alpha-D-ribose 1-diphosphate + uracil. Regulates the transcription of the pyrimidine nucleotide (pyr) operon in response to exogenous pyrimidines. Its function is as follows. Also displays a weak uracil phosphoribosyltransferase activity which is not physiologically significant. This is Bifunctional protein PyrR from Geobacter sulfurreducens (strain ATCC 51573 / DSM 12127 / PCA).